The following is a 308-amino-acid chain: Pantothenate synthetase (308 aa).

39 to 46 (MGALHDGH) serves as a coordination point for ATP. Catalysis depends on His46, which acts as the Proton donor. Gln71 is a (R)-pantoate binding site. Beta-alanine is bound at residue Gln71. 157 to 160 (GEKD) provides a ligand contact to ATP. Residue Gln163 coordinates (R)-pantoate. Residues Val186 and 194-197 (MSSR) each bind ATP. The disordered stretch occupies residues 286 to 308 (IETPAGTAGPDGDRQYAQSPWRN).

Belongs to the pantothenate synthetase family. In terms of assembly, homodimer.

It is found in the cytoplasm. It catalyses the reaction (R)-pantoate + beta-alanine + ATP = (R)-pantothenate + AMP + diphosphate + H(+). Its pathway is cofactor biosynthesis; (R)-pantothenate biosynthesis; (R)-pantothenate from (R)-pantoate and beta-alanine: step 1/1. In terms of biological role, catalyzes the condensation of pantoate with beta-alanine in an ATP-dependent reaction via a pantoyl-adenylate intermediate. The sequence is that of Pantothenate synthetase from Mycobacterium avium (strain 104).